The chain runs to 437 residues: Nicotinate phosphoribosyltransferase (437 aa).

Phosphohistidine; by autocatalysis is present on H231.

Belongs to the NAPRTase family. In terms of processing, transiently phosphorylated on a His residue during the reaction cycle. Phosphorylation strongly increases the affinity for substrates and increases the rate of nicotinate D-ribonucleotide production. Dephosphorylation regenerates the low-affinity form of the enzyme, leading to product release.

The catalysed reaction is nicotinate + 5-phospho-alpha-D-ribose 1-diphosphate + ATP + H2O = nicotinate beta-D-ribonucleotide + ADP + phosphate + diphosphate. It functions in the pathway cofactor biosynthesis; NAD(+) biosynthesis; nicotinate D-ribonucleotide from nicotinate: step 1/1. In terms of biological role, catalyzes the synthesis of beta-nicotinate D-ribonucleotide from nicotinate and 5-phospho-D-ribose 1-phosphate at the expense of ATP. This chain is Nicotinate phosphoribosyltransferase, found in Vibrio vulnificus (strain CMCP6).